The sequence spans 297 residues: 3-mercaptopyruvate sulfurtransferase (297 aa).

An N-acetylalanine modification is found at alanine 2. In terms of domain architecture, Rhodanese 1 spans 25-144 (SSQPLKLLDA…WLNQNLPISS (120 aa)). At serine 35 the chain carries Phosphoserine. Residue lysine 40 is modified to N6-acetyllysine; alternate. Lysine 40 is subject to N6-succinyllysine; alternate. Residues 145–160 (GKSHSEPAEFSAQLDP) form a hinge region. N6-succinyllysine is present on residues lysine 146 and lysine 164. The 115-residue stretch at 174–288 (DARRFQVVDA…WYMRAQPEHI (115 aa)) folds into the Rhodanese 2 domain. Arginine 188 provides a ligand contact to substrate. Cysteine 248 (cysteine persulfide intermediate) is an active-site residue.

As to quaternary structure, monomer (active form). Homodimer; disulfide-linked (inactive form). In terms of tissue distribution, expressed in the brain and retina. In the retina, localized to the inner and outer plexiform layer, the inner and outer nuclear layer and the outer segments of photoreceptors. In the brain, localized to neurons of mitral cell layers, glomerular, and external plexiform layers in the olfactory bulb. Also found in Purkinje cell stomata and proximal dendrites. In the spinal cord, localized to large neurons. In the cerebral cortex, localized to pyramidial neurons in layers II/III and V, and in layers I-VI of neocortical areas. In the hippocampus, found in CA1 and CA3 pyramidal cells.

Its subcellular location is the cytoplasm. It is found in the mitochondrion. It localises to the synapse. The protein resides in the synaptosome. It carries out the reaction 2-oxo-3-sulfanylpropanoate + [thioredoxin]-dithiol = [thioredoxin]-disulfide + hydrogen sulfide + pyruvate + H(+). With respect to regulation, by oxidative stress, and thioredoxin. Under oxidative stress conditions, the catalytic cysteine site is converted to a sulfenate which inhibits the MPST enzyme activity. Reduced thioredoxin cleaves an intersubunit disulfide bond to turn on the redox switch and reactivate the enzyme. Inhibited by different oxidants, hydrogen peroxide and tetrathionate. Functionally, transfer of a sulfur ion to cyanide or to other thiol compounds. Also has weak rhodanese activity. Detoxifies cyanide and is required for thiosulfate biosynthesis. Acts as an antioxidant. In combination with cysteine aminotransferase (CAT), contributes to the catabolism of cysteine and is an important producer of hydrogen sulfide in the brain, retina and vascular endothelial cells. Hydrogen sulfide H(2)S is an important synaptic modulator, signaling molecule, smooth muscle contractor and neuroprotectant. Its production by the 3MST/CAT pathway is regulated by calcium ions. This is 3-mercaptopyruvate sulfurtransferase (Mpst) from Mus musculus (Mouse).